The following is a 434-amino-acid chain: Beta-enolase (434 aa).

Alanine 2 is modified (N-acetylalanine). A Phosphothreonine modification is found at threonine 72. A phosphoserine mark is found at serine 83 and serine 157. The substrate site is built by histidine 158 and glutamate 167. A Phosphoserine modification is found at serine 176. Threonine 205 carries the post-translational modification Phosphothreonine. Glutamate 210 (proton donor) is an active-site residue. Threonine 229 is subject to Phosphothreonine. Tyrosine 236 is subject to Phosphotyrosine. Residue aspartate 245 coordinates Mg(2+). Serine 263 carries the phosphoserine modification. Residues glutamate 293 and aspartate 318 each coordinate substrate. Mg(2+) is bound by residues glutamate 293 and aspartate 318. Residue lysine 343 is the Proton acceptor of the active site. Residues 370 to 373 (SHRS) and lysine 394 contribute to the substrate site.

The protein belongs to the enolase family. In terms of assembly, mammalian enolase is composed of 3 isozyme subunits, alpha, beta and gamma, which can form homodimers or heterodimers which are cell-type and development-specific. Interacts with PNKD. Mg(2+) is required as a cofactor. As to expression, the alpha/alpha homodimer is expressed in embryo and in most adult tissues. The alpha/beta heterodimer and the beta/beta homodimer are found in striated muscle, and the alpha/gamma heterodimer and the gamma/gamma homodimer in neurons.

The protein resides in the cytoplasm. The catalysed reaction is (2R)-2-phosphoglycerate = phosphoenolpyruvate + H2O. It participates in carbohydrate degradation; glycolysis; pyruvate from D-glyceraldehyde 3-phosphate: step 4/5. Functionally, glycolytic enzyme that catalyzes the conversion of 2-phosphoglycerate to phosphoenolpyruvate. Appears to have a function in striated muscle development and regeneration. The sequence is that of Beta-enolase (ENO3) from Oryctolagus cuniculus (Rabbit).